The sequence spans 178 residues: ATP synthase subunit delta (178 aa).

This sequence belongs to the ATPase delta chain family. In terms of assembly, F-type ATPases have 2 components, F(1) - the catalytic core - and F(0) - the membrane proton channel. F(1) has five subunits: alpha(3), beta(3), gamma(1), delta(1), epsilon(1). F(0) has three main subunits: a(1), b(2) and c(10-14). The alpha and beta chains form an alternating ring which encloses part of the gamma chain. F(1) is attached to F(0) by a central stalk formed by the gamma and epsilon chains, while a peripheral stalk is formed by the delta and b chains.

Its subcellular location is the cell inner membrane. In terms of biological role, f(1)F(0) ATP synthase produces ATP from ADP in the presence of a proton or sodium gradient. F-type ATPases consist of two structural domains, F(1) containing the extramembraneous catalytic core and F(0) containing the membrane proton channel, linked together by a central stalk and a peripheral stalk. During catalysis, ATP synthesis in the catalytic domain of F(1) is coupled via a rotary mechanism of the central stalk subunits to proton translocation. Its function is as follows. This protein is part of the stalk that links CF(0) to CF(1). It either transmits conformational changes from CF(0) to CF(1) or is implicated in proton conduction. The protein is ATP synthase subunit delta of Stutzerimonas stutzeri (strain A1501) (Pseudomonas stutzeri).